A 339-amino-acid polypeptide reads, in one-letter code: 3-isopropylmalate dehydrogenase (339 aa).

Substrate-binding residues include Arg-87, Arg-97, Arg-124, and Asp-214. 3 residues coordinate Mg(2+): Asp-214, Asp-238, and Asp-242. Residue 274–286 (GSAPDIAGQGIAD) participates in NAD(+) binding.

The protein belongs to the isocitrate and isopropylmalate dehydrogenases family. LeuB type 2 subfamily. Homodimer. Mg(2+) is required as a cofactor. It depends on Mn(2+) as a cofactor.

It localises to the cytoplasm. The enzyme catalyses (2R,3S)-3-isopropylmalate + NAD(+) = 4-methyl-2-oxopentanoate + CO2 + NADH. It functions in the pathway amino-acid biosynthesis; L-leucine biosynthesis; L-leucine from 3-methyl-2-oxobutanoate: step 3/4. In terms of biological role, catalyzes the oxidation of 3-carboxy-2-hydroxy-4-methylpentanoate (3-isopropylmalate) to 3-carboxy-4-methyl-2-oxopentanoate. The product decarboxylates to 4-methyl-2 oxopentanoate. This Mycobacterium marinum (strain ATCC BAA-535 / M) protein is 3-isopropylmalate dehydrogenase.